The chain runs to 320 residues: Dermonecrotic toxin LarSicTox-alphaIB2a (320 aa).

Residues 1–15 form the signal peptide; the sequence is MSHSSTALLHPYVAA. Positions 16–41 are excised as a propeptide; the sequence is RATEKFAPIYFFCHPLQSAETDVAER. The active site involves His-52. Mg(2+) is bound by residues Glu-72 and Asp-74. His-88 acts as the Nucleophile in catalysis. 2 cysteine pairs are disulfide-bonded: Cys-92/Cys-98 and Cys-94/Cys-237. Asp-132 is a binding site for Mg(2+). A glycan (N-linked (GlcNAc...) asparagine) is linked at Asn-297.

Belongs to the arthropod phospholipase D family. Class II subfamily. Mg(2+) is required as a cofactor. Expressed by the venom gland.

It is found in the secreted. The enzyme catalyses an N-(acyl)-sphingosylphosphocholine = an N-(acyl)-sphingosyl-1,3-cyclic phosphate + choline. It carries out the reaction an N-(acyl)-sphingosylphosphoethanolamine = an N-(acyl)-sphingosyl-1,3-cyclic phosphate + ethanolamine. The catalysed reaction is a 1-acyl-sn-glycero-3-phosphocholine = a 1-acyl-sn-glycero-2,3-cyclic phosphate + choline. It catalyses the reaction a 1-acyl-sn-glycero-3-phosphoethanolamine = a 1-acyl-sn-glycero-2,3-cyclic phosphate + ethanolamine. Its function is as follows. Dermonecrotic toxins cleave the phosphodiester linkage between the phosphate and headgroup of certain phospholipids (sphingolipid and lysolipid substrates), forming an alcohol (often choline) and a cyclic phosphate. This toxin acts on sphingomyelin (SM). It may also act on ceramide phosphoethanolamine (CPE), lysophosphatidylcholine (LPC) and lysophosphatidylethanolamine (LPE), but not on lysophosphatidylserine (LPS), and lysophosphatidylglycerol (LPG). It acts by transphosphatidylation, releasing exclusively cyclic phosphate products as second products. Induces dermonecrosis, hemolysis, increased vascular permeability, edema, inflammatory response, and platelet aggregation. The protein is Dermonecrotic toxin LarSicTox-alphaIB2a of Loxosceles arizonica (Arizona brown spider).